The following is a 536-amino-acid chain: Chaperonin GroEL 1 (536 aa).

ATP-binding positions include 29–32, 86–90, Gly413, 476–478, and Asp492; these read TLGP, DGTTT, and NAA.

This sequence belongs to the chaperonin (HSP60) family. Forms a cylinder of 14 subunits composed of two heptameric rings stacked back-to-back. Interacts with the co-chaperonin GroES.

Its subcellular location is the cytoplasm. It catalyses the reaction ATP + H2O + a folded polypeptide = ADP + phosphate + an unfolded polypeptide.. Functionally, together with its co-chaperonin GroES, plays an essential role in assisting protein folding. The GroEL-GroES system forms a nano-cage that allows encapsulation of the non-native substrate proteins and provides a physical environment optimized to promote and accelerate protein folding. The sequence is that of Chaperonin GroEL 1 from Nocardia farcinica (strain IFM 10152).